We begin with the raw amino-acid sequence, 70 residues long: DNA gyrase inhibitor YacG (70 aa).

4 residues coordinate Zn(2+): Cys-20, Cys-23, Cys-35, and Cys-39.

This sequence belongs to the DNA gyrase inhibitor YacG family. As to quaternary structure, interacts with GyrB. It depends on Zn(2+) as a cofactor.

In terms of biological role, inhibits all the catalytic activities of DNA gyrase by preventing its interaction with DNA. Acts by binding directly to the C-terminal domain of GyrB, which probably disrupts DNA binding by the gyrase. The chain is DNA gyrase inhibitor YacG from Rhizobium etli (strain ATCC 51251 / DSM 11541 / JCM 21823 / NBRC 15573 / CFN 42).